The following is a 1055-amino-acid chain: MTPSIGYVDEDENGQKSKFLRSSDDPYRLSIEEVIEKFETHLENGLSDEQAKSKLAKVGLNNLGADEKISISKILAHQIFNAMVLVLIISLIIALAIKDWISGGVIGFVVFINIFVGFIQELKAEKTMGSLRSLSSPMARALRNGVDSNINAEEVVPGDIIHIKVGDTIPADLRLVDCMNLETDEALLTGESLPVAKDHEEIYDYGAPIPVGDRLNMAFSSSIVAKGRGTGIVVATGLDTEIGKIAKSLKNNDDAVVVKVDKSLNPSTKDYLIAVIKTTKNIIFNVLGTNVGTPLQRKLSWLAILLFWVAVLFAIVVMASQEMRVNRNVAIYAICVALSMIPSSLVVVLTITMAIGAQVMVTKNVIVRKLDSLEALGGINDICSDKTGTLTMGKMIARKVWIPNVGSYLVQNSNEPFNPTVGDISFNENSPKFIKETDDELDFIPHLPSPTPILFEKWLHIATLANIASLNQIQNEMDGSIEWEAHGDATEIAINVFTTRLGYTRDKLIGDSLEHLNEFPFDSSIKRMSTVYKDKDGNSTVYTKGAVERVLSCCKYWYNPELTALSEEDKLLIESNMNALSSEGLRVLAFAQREINISKENVSNREVVESNLIFLGLIGIYDPPRPESAKSVKLCHKAGINVHMLTGDHPGTAKAIAQEVGILPHNLYHYREEVVKVMVMIANEFDSLSDDEIDNLPVLPLVIARCAPQTKVRMIEALHRRGKFVAMTGDGVNDSPSLKKADVGIAMGLNGSDVAKDASDIVLTDDNFASILNAIEEGRRMSSNIQKFVLQLLAENVAQALYLMIGLAFIDKSGYSVFPLSPVEVLWIIVVTSCFPAMGLGQEKASHDILEQPPNATIFTWEVIIDMIAYGFWMAVCCLVCFVCIVYGKGDGSLGENCNEGSDTGCNLVFRGRSGAFAAFTWCALLLAWECIHLRLSFFKMRPELENPWWKQLAIDLWDNQFLFWSVMGAIVSVFPVVYIPVINNKVFLHAPIGYEWGLAVAFTILFLIGAEGWKWFKRVYYRKSNANNPEYDLERNDPFKEYSSFSKSNTMEIV.

The Cytoplasmic portion of the chain corresponds to 1–73 (MTPSIGYVDE…GADEKISISK (73 aa)). A helical transmembrane segment spans residues 74–94 (ILAHQIFNAMVLVLIISLIIA). At 95–99 (LAIKD) the chain is on the extracellular side. A helical transmembrane segment spans residues 100–120 (WISGGVIGFVVFINIFVGFIQ). The Cytoplasmic portion of the chain corresponds to 121–298 (ELKAEKTMGS…TNVGTPLQRK (178 aa)). Residues 299-319 (LSWLAILLFWVAVLFAIVVMA) traverse the membrane as a helical segment. Over 320–328 (SQEMRVNRN) the chain is Extracellular. The helical transmembrane segment at 329–349 (VAIYAICVALSMIPSSLVVVL) threads the bilayer. The Cytoplasmic segment spans residues 350-789 (TITMAIGAQV…RMSSNIQKFV (440 aa)). The active-site 4-aspartylphosphate intermediate is the aspartate 385. Aspartate 385 and threonine 387 together coordinate Mg(2+). Threonine 387, glutamate 491, lysine 544, arginine 586, threonine 646, glycine 647, aspartate 648, arginine 705, and lysine 711 together coordinate ATP. Aspartate 730 is a Mg(2+) binding site. Position 733 (asparagine 733) interacts with ATP. A helical transmembrane segment spans residues 790–810 (LQLLAENVAQALYLMIGLAFI). Residues 811–816 (DKSGYS) are Extracellular-facing. The chain crosses the membrane as a helical span at residues 817 to 837 (VFPLSPVEVLWIIVVTSCFPA). Over 838–866 (MGLGQEKASHDILEQPPNATIFTWEVIID) the chain is Cytoplasmic. The chain crosses the membrane as a helical span at residues 867-887 (MIAYGFWMAVCCLVCFVCIVY). Residues 888–913 (GKGDGSLGENCNEGSDTGCNLVFRGR) are Extracellular-facing. Residues 914–934 (SGAFAAFTWCALLLAWECIHL) form a helical membrane-spanning segment. At 935–962 (RLSFFKMRPELENPWWKQLAIDLWDNQF) the chain is on the cytoplasmic side. The helical transmembrane segment at 963–983 (LFWSVMGAIVSVFPVVYIPVI) threads the bilayer. Topologically, residues 984–990 (NNKVFLH) are extracellular. Residues 991–1011 (APIGYEWGLAVAFTILFLIGA) traverse the membrane as a helical segment. The Cytoplasmic portion of the chain corresponds to 1012–1055 (EGWKWFKRVYYRKSNANNPEYDLERNDPFKEYSSFSKSNTMEIV).

Belongs to the cation transport ATPase (P-type) (TC 3.A.3) family. Type IID subfamily. The cofactor is Mg(2+). In terms of processing, the active site is phosphorylated in presence of sodium or potassium and in conditions of higher pH. Not phosphorylated in presence of calcium ions.

Its subcellular location is the cell membrane. The catalysed reaction is Na(+)(in) + ATP + H2O = Na(+)(out) + ADP + phosphate + H(+). It catalyses the reaction K(+)(in) + ATP + H2O = K(+)(out) + ADP + phosphate + H(+). Its function is as follows. Catalyzes the hydrolysis of ATP coupled with the export of sodium and potassium from the cell. May be an inefficient potassium exporter. May transport other cations such as lithium. Sodium/potassium efflux ATPases are involved in salt tolerance and maintaining the membrane potential across the plasma membrane in high salinity (Na+) or alkaline (K+) environments. This is Sodium/potassium exporting P-type ATPase 1 from Schwanniomyces occidentalis (Yeast).